Consider the following 263-residue polypeptide: Chymotrypsinogen 2 (263 aa).

The first 18 residues, 1–18 (MAFLWLLSCFALLGTAFG), serve as a signal peptide directing secretion. 5 disulfide bridges follow: cysteine 19/cysteine 140, cysteine 60/cysteine 76, cysteine 154/cysteine 219, cysteine 186/cysteine 200, and cysteine 209/cysteine 238. Positions 34-261 (IVNGEDAVPG…LIPWVQQILQ (228 aa)) constitute a Peptidase S1 domain. The active-site Charge relay system is the histidine 75. Serine 93 carries the phosphoserine modification. Aspartate 120 (charge relay system) is an active-site residue. Serine 213 serves as the catalytic Charge relay system.

This sequence belongs to the peptidase S1 family.

It localises to the secreted. The protein resides in the extracellular space. It carries out the reaction Preferential cleavage: Tyr-|-Xaa, Trp-|-Xaa, Phe-|-Xaa, Leu-|-Xaa.. This chain is Chymotrypsinogen 2 (CTRB1), found in Canis lupus familiaris (Dog).